The chain runs to 439 residues: AT-hook motif nuclear-localized protein 13 (439 aa).

Disordered regions lie at residues 1–46 (MDSR…NSYN), 69–216 (QRLP…LGGT), and 342–439 (GRKQ…NSPQ). Low complexity-rich tracts occupy residues 9–31 (QQQQQQQQQQQQQQQQQHLQQQQ) and 79–95 (PHQPQQHQYHHPQPQQQ). Polar residues predominate over residues 109 to 120 (SPSSVAATQQHS). A compositionally biased stretch (basic residues) spans 130–139 (VKKKRGRPRK). A Bipartite nuclear localization signal motif is present at residues 131 to 139 (KKKRGRPRK). A DNA-binding region (a.T hook 1) is located at residues 131–143 (KKKRGRPRKYAAD). 2 stretches are compositionally biased toward gly residues: residues 143 to 152 (DGGGGGGGGS) and 171 to 183 (YGGGNEGGGGGDS). The segment at residues 196-208 (KRNRGRPPGSGKK) is a DNA-binding region (a.T hook 2). A PPC domain is found at 217 to 359 (GGVGFTPHVI…GRAQNTPEPA (143 aa)). Residues 347-357 (QSAGRAQNTPE) show a composition bias toward polar residues. Composition is skewed to low complexity over residues 376–386 (SPRSQGQQHSS) and 403–416 (NNNNSNNHGIFGNS). Residues 428–439 (MYQNLWPGNSPQ) show a composition bias toward polar residues.

The protein localises to the nucleus. Transcription factor that specifically binds AT-rich DNA sequences related to the nuclear matrix attachment regions (MARs). The polypeptide is AT-hook motif nuclear-localized protein 13 (Arabidopsis thaliana (Mouse-ear cress)).